A 459-amino-acid chain; its full sequence is Bifunctional protein GlmU (459 aa).

The segment at 1–229 (MSNYAIILAA…FDESLGVNDR (229 aa)) is pyrophosphorylase. UDP-N-acetyl-alpha-D-glucosamine contacts are provided by residues 8-11 (LAAG), Lys-22, Gln-72, and 77-78 (GT). Asp-102 lines the Mg(2+) pocket. The UDP-N-acetyl-alpha-D-glucosamine site is built by Gly-139, Glu-154, Asn-169, and Asn-227. Asn-227 lines the Mg(2+) pocket. The linker stretch occupies residues 230–250 (VALATAEKVMRHRIARQHMVN). The tract at residues 251-459 (GVTVVNPDSA…NKKPHHPSQK (209 aa)) is N-acetyltransferase. UDP-N-acetyl-alpha-D-glucosamine contacts are provided by Arg-332 and Lys-350. The Proton acceptor role is filled by His-362. Tyr-365 and Asn-376 together coordinate UDP-N-acetyl-alpha-D-glucosamine. Acetyl-CoA-binding positions include Ala-379, 385–386 (NY), Ser-404, Ala-422, and Arg-439.

The protein in the N-terminal section; belongs to the N-acetylglucosamine-1-phosphate uridyltransferase family. It in the C-terminal section; belongs to the transferase hexapeptide repeat family. Homotrimer. It depends on Mg(2+) as a cofactor.

The protein resides in the cytoplasm. It carries out the reaction alpha-D-glucosamine 1-phosphate + acetyl-CoA = N-acetyl-alpha-D-glucosamine 1-phosphate + CoA + H(+). It catalyses the reaction N-acetyl-alpha-D-glucosamine 1-phosphate + UTP + H(+) = UDP-N-acetyl-alpha-D-glucosamine + diphosphate. It participates in nucleotide-sugar biosynthesis; UDP-N-acetyl-alpha-D-glucosamine biosynthesis; N-acetyl-alpha-D-glucosamine 1-phosphate from alpha-D-glucosamine 6-phosphate (route II): step 2/2. The protein operates within nucleotide-sugar biosynthesis; UDP-N-acetyl-alpha-D-glucosamine biosynthesis; UDP-N-acetyl-alpha-D-glucosamine from N-acetyl-alpha-D-glucosamine 1-phosphate: step 1/1. It functions in the pathway bacterial outer membrane biogenesis; LPS lipid A biosynthesis. In terms of biological role, catalyzes the last two sequential reactions in the de novo biosynthetic pathway for UDP-N-acetylglucosamine (UDP-GlcNAc). The C-terminal domain catalyzes the transfer of acetyl group from acetyl coenzyme A to glucosamine-1-phosphate (GlcN-1-P) to produce N-acetylglucosamine-1-phosphate (GlcNAc-1-P), which is converted into UDP-GlcNAc by the transfer of uridine 5-monophosphate (from uridine 5-triphosphate), a reaction catalyzed by the N-terminal domain. The protein is Bifunctional protein GlmU of Streptococcus agalactiae serotype V (strain ATCC BAA-611 / 2603 V/R).